Reading from the N-terminus, the 475-residue chain is Ribulose bisphosphate carboxylase large chain (475 aa).

A propeptide spanning residues 1–2 (MS) is cleaved from the precursor. The residue at position 3 (Pro3) is an N-acetylproline. Position 14 is an N6,N6,N6-trimethyllysine (Lys14). Substrate is bound by residues Asn123 and Thr173. The Proton acceptor role is filled by Lys175. Lys177 is a substrate binding site. Mg(2+)-binding residues include Lys201, Asp203, and Glu204. At Lys201 the chain carries N6-carboxylysine. His294 acts as the Proton acceptor in catalysis. 3 residues coordinate substrate: Arg295, His327, and Ser379.

This sequence belongs to the RuBisCO large chain family. Type I subfamily. As to quaternary structure, heterohexadecamer of 8 large chains and 8 small chains; disulfide-linked. The disulfide link is formed within the large subunit homodimers. Mg(2+) serves as cofactor. In terms of processing, the disulfide bond which can form in the large chain dimeric partners within the hexadecamer appears to be associated with oxidative stress and protein turnover.

Its subcellular location is the plastid. The protein resides in the chloroplast. It catalyses the reaction 2 (2R)-3-phosphoglycerate + 2 H(+) = D-ribulose 1,5-bisphosphate + CO2 + H2O. It carries out the reaction D-ribulose 1,5-bisphosphate + O2 = 2-phosphoglycolate + (2R)-3-phosphoglycerate + 2 H(+). Its function is as follows. RuBisCO catalyzes two reactions: the carboxylation of D-ribulose 1,5-bisphosphate, the primary event in carbon dioxide fixation, as well as the oxidative fragmentation of the pentose substrate in the photorespiration process. Both reactions occur simultaneously and in competition at the same active site. This Larix occidentalis (Western larch) protein is Ribulose bisphosphate carboxylase large chain.